Consider the following 179-residue polypeptide: Fas apoptotic inhibitory molecule 1 (179 aa).

N-acetylthreonine is present on Thr-2.

This sequence belongs to the FAIM1 family.

It localises to the cytoplasm. Plays a role as an inducible effector molecule that mediates Fas resistance produced by surface Ig engagement in B cells. The chain is Fas apoptotic inhibitory molecule 1 (FAIM) from Homo sapiens (Human).